We begin with the raw amino-acid sequence, 511 residues long: Bifunctional purine biosynthesis protein PurH (511 aa).

In terms of domain architecture, MGS-like spans 1–145 (MKKRALVSVS…KNHKFVSVIV (145 aa)).

Belongs to the PurH family.

It catalyses the reaction (6R)-10-formyltetrahydrofolate + 5-amino-1-(5-phospho-beta-D-ribosyl)imidazole-4-carboxamide = 5-formamido-1-(5-phospho-D-ribosyl)imidazole-4-carboxamide + (6S)-5,6,7,8-tetrahydrofolate. The catalysed reaction is IMP + H2O = 5-formamido-1-(5-phospho-D-ribosyl)imidazole-4-carboxamide. It participates in purine metabolism; IMP biosynthesis via de novo pathway; 5-formamido-1-(5-phospho-D-ribosyl)imidazole-4-carboxamide from 5-amino-1-(5-phospho-D-ribosyl)imidazole-4-carboxamide (10-formyl THF route): step 1/1. It functions in the pathway purine metabolism; IMP biosynthesis via de novo pathway; IMP from 5-formamido-1-(5-phospho-D-ribosyl)imidazole-4-carboxamide: step 1/1. This is Bifunctional purine biosynthesis protein PurH from Bacillus cereus (strain 03BB102).